The primary structure comprises 352 residues: UPF0324 membrane protein BCE_5279 (352 aa).

A run of 10 helical transmembrane segments spans residues 25–47, 52–71, 111–130, 140–162, 169–191, 201–223, 230–252, 267–289, 291–313, and 328–350; these read FGFS…LAEL, IMGQ…AAIG, VLVI…YGLT, GILT…APQV, TAVG…TLLY, YGVF…APGG, AVIV…GLWF, LPIP…GIIP, VVAG…GLGL, and FVAG…YALG.

This sequence belongs to the UPF0324 family.

It localises to the cell membrane. The polypeptide is UPF0324 membrane protein BCE_5279 (Bacillus cereus (strain ATCC 10987 / NRS 248)).